The chain runs to 506 residues: L-amino-acid oxidase (506 aa).

The N-terminal stretch at 1–18 (MNVFFTFSLLFLAALGSC) is a signal peptide. Cysteines 28 and 191 form a disulfide. Glutamate 36 serves as a coordination point for Zn(2+). Residues 61-62 (MS), serine 62, 81-82 (EA), arginine 89, and 105-108 (GPMR) contribute to the FAD site. Substrate is bound at residue arginine 108. The Zn(2+) site is built by glutamate 111, glutamate 118, and glutamate 150. N-linked (GlcNAc...) asparagine glycosylation occurs at asparagine 190. Aspartate 219 serves as a coordination point for Zn(2+). Residue histidine 241 participates in substrate binding. Glutamate 248 is a binding site for Zn(2+). Position 279 (valine 279) interacts with FAD. Zn(2+) contacts are provided by glutamate 299 and histidine 332. Cysteine 349 and cysteine 430 form a disulfide bridge. Residue tyrosine 390 participates in substrate binding. Histidine 458 serves as a coordination point for Zn(2+). Residues glutamate 475 and 482–487 (GWIDST) contribute to the FAD site. Residue 482–483 (GW) participates in substrate binding.

Belongs to the flavin monoamine oxidase family. FIG1 subfamily. As to quaternary structure, homodimer; non-covalently linked. Stabilized by a single zinc-binding site located at the dimer interface (Asp-219, His-332 and His-458). Other zinc-bind sites can be understood as transient and non-specific, and appear due to the high concentration of zinc ions used in the crystallization experiments. FAD serves as cofactor. In terms of tissue distribution, expressed by the venom gland.

The protein resides in the secreted. It carries out the reaction an L-alpha-amino acid + O2 + H2O = a 2-oxocarboxylate + H2O2 + NH4(+). It catalyses the reaction L-leucine + O2 + H2O = 4-methyl-2-oxopentanoate + H2O2 + NH4(+). The enzyme catalyses L-phenylalanine + O2 + H2O = 3-phenylpyruvate + H2O2 + NH4(+). The catalysed reaction is L-tryptophan + O2 + H2O = indole-3-pyruvate + H2O2 + NH4(+). It carries out the reaction L-methionine + O2 + H2O = 4-methylsulfanyl-2-oxobutanoate + H2O2 + NH4(+). It catalyses the reaction L-isoleucine + O2 + H2O = (S)-3-methyl-2-oxopentanoate + H2O2 + NH4(+). The enzyme catalyses L-tyrosine + O2 + H2O = 3-(4-hydroxyphenyl)pyruvate + H2O2 + NH4(+). In terms of biological role, catalyzes an oxidative deamination of predominantly hydrophobic and aromatic L-amino acids, thus producing hydrogen peroxide that may contribute to the diverse toxic effects of this enzyme. Shows high catalytic activity against L-Met, L-Leu, L-Phe, L-Trp, L-Tyr, L-Ile. Shows no or weak activity on L-Cys, L-Val, L-Gln, L-Thr, L-Ser, L-Lys, L-Arg, L-Asn, L-Glu, L-Gly, L-Pro, L-Asp and L-His. Induces platelet aggregation in platelet-rich plasma, probably due to hydrogen peroxide production, since catalase inhibits aggregation effect. Induces moderate mouse paw edema. Induces apoptosis and shows cytotoxicity against several cancer cell lines, which is inhibited by catalase. Shows hemolytic activity and antibacterial activities against both Gram-positive and Gram-negative bacteria. Has parasiticidal activities against both trypanosomes and leishmania, as a result of enzyme-catalyzed hydrogen peroxide production. Unlike other snake venom L-amino acid oxidases, does not induce hemorrhage (with 50 ug of enzyme). The chain is L-amino-acid oxidase from Bothrops atrox (Barba amarilla).